Reading from the N-terminus, the 188-residue chain is UPF0340 protein SSU98_0310 (188 aa).

It belongs to the UPF0340 family.

This chain is UPF0340 protein SSU98_0310, found in Streptococcus suis (strain 98HAH33).